Reading from the N-terminus, the 1036-residue chain is Ubiquitin carboxyl-terminal hydrolase 48 (1036 aa).

One can recognise a USP domain in the interval 89 to 421 (VGLTNLGASC…NAYMLVYRLQ (333 aa)). C98 functions as the Nucleophile in the catalytic mechanism. H353 functions as the Proton acceptor in the catalytic mechanism. 3 DUSP domains span residues 460–554 (QSVD…KALC), 569–692 (NQLN…YKEC), and 712–825 (MIAK…RIEV). Residues 611–644 (DEQDGEAEQSNGKINGSPFSKDESKEEKKEEEEE) are disordered. Residues 618–628 (EQSNGKINGSP) are compositionally biased toward polar residues. Residues 881 to 924 (APELNVSSSETEEDKEEAKPDGEKDPDFNQSNGGTKRQKTSQQG) form a disordered region. A phosphoserine mark is found at S887, S888, and S889. Over residues 896-907 (EEAKPDGEKDPD) the composition is skewed to basic and acidic residues. Over residues 908–924 (FNQSNGGTKRQKTSQQG) the composition is skewed to polar residues. The Ubiquitin-like domain maps to 930-1010 (KQVIRRSTRH…ILLKADEPIA (81 aa)). Residue K957 is modified to N6-acetyllysine.

Belongs to the peptidase C19 family. In terms of assembly, interacts with TRAF2 and RELA. Interacts with GPS1. Present in the brain, in particular in the postsynaptic density and the dendritic lipid raft fractions (at protein level).

The protein localises to the cytoplasm. It is found in the nucleus. It localises to the cell projection. Its subcellular location is the cilium. It catalyses the reaction Thiol-dependent hydrolysis of ester, thioester, amide, peptide and isopeptide bonds formed by the C-terminal Gly of ubiquitin (a 76-residue protein attached to proteins as an intracellular targeting signal).. Functionally, deubiquitinase that recognizes and hydrolyzes the peptide bond at the C-terminal Gly of ubiquitin. Involved in the processing of polyubiquitin precursors as well as that of ubiquitinated proteins. Plays a role in the regulation of NF-kappa-B activation by TNF receptor superfamily via its interactions with RELA and TRAF2. May also play a regulatory role at postsynaptic sites. Plays an important role in cell cycle progression by deubiquitinating Aurora B/AURKB and thereby extending its stability. In the context of H. pylori infection, stabilizes nuclear RELA through deubiquitination, thereby promoting the transcriptional activity of RELA to prolong TNFAIP3 de novo synthesis. Consequently, TNFAIP3 suppresses caspase activity and apoptotic cell death. Also functions in the modulation of the ciliary and synaptic transport as well as cytoskeleton organization, which are key for photoreceptor function and homeostasis. To achieve this, stabilizes the levels of the retinal degeneration-associated proteins ARL3 and UNC119 using distinct mechanisms. Plays a positive role in pyroptosis by stabilizing gasdermin E/GSDME through removal of its 'Lys-48'-linked ubiquitination. The sequence is that of Ubiquitin carboxyl-terminal hydrolase 48 (Usp48) from Rattus norvegicus (Rat).